The chain runs to 149 residues: Protein cornichon homolog 2 (149 aa).

3 helical membrane passes run 3–23, 59–79, and 117–137; these read IELI…GLTA, ALCA…MAPV, and YFSL…TLFI.

The protein belongs to the cornichon family.

The protein resides in the endoplasmic reticulum membrane. Its subcellular location is the golgi apparatus membrane. In terms of biological role, acts as a cargo receptor necessary for the transportation of secretory proteins from the endoplasmic reticulum (ER) in COPII-coated vesicles targeted to the Golgi apparatus. In Oryza sativa subsp. japonica (Rice), this protein is Protein cornichon homolog 2.